The sequence spans 64 residues: Large ribosomal subunit protein bL35 (64 aa).

Composition is skewed to basic residues over residues 1–15 (MPKN…KRFK) and 27–42 (AGKR…KKTR). A disordered region spans residues 1–45 (MPKNKTHSGASKRFKITGSGKVLRERAGKRHLLEHKSSKKTRSLT).

This sequence belongs to the bacterial ribosomal protein bL35 family.

The chain is Large ribosomal subunit protein bL35 from Streptomyces griseus subsp. griseus (strain JCM 4626 / CBS 651.72 / NBRC 13350 / KCC S-0626 / ISP 5235).